We begin with the raw amino-acid sequence, 538 residues long: Anti-bacteriophage protein A (538 aa).

In terms of assembly, interacts with AbpB.

Its function is as follows. Part of an antiviral system composed of AbpA and AbpB; when both are expressed from a plasmid they confer resistance to phages T2, T4, T7 and lambda but not RB32 or RB69. Resistance is temperature dependent, it can be seen at 30 degrees Celsius but not at 37 or 42 degrees Celsius. The system impairs phage but not bacterial DNA synthesis (shown for T4, T7 and lambda). Partially suppressed by mutations in T4 gene 41, a replicative helicase. The protein is Anti-bacteriophage protein A of Escherichia coli (strain K12).